A 483-amino-acid chain; its full sequence is Zinc metalloproteinase/disintegrin (483 aa).

A signal peptide spans 1–20; sequence MIQVLLVTICLAVFPYQGSS. The propeptide occupies 21–190; it reads IILESGNVND…KASQLYLTPE (170 aa). The Peptidase M12B domain occupies 197–395; that stretch reads RYIELAIVVD…RNPQCILNAP (199 aa). E200 contributes to the Ca(2+) binding site. A glycan (N-linked (GlcNAc...) asparagine) is linked at N263. Residue D284 coordinates Ca(2+). The N-linked (GlcNAc...) asparagine glycan is linked to N293. 3 disulfides stabilise this stretch: C308/C390, C352/C374, and C354/C357. Position 333 (H333) interacts with Zn(2+). E334 is a catalytic residue. Zn(2+)-binding residues include H337 and H343. Positions 390 and 393 each coordinate Ca(2+). The propeptide occupies 396 to 413; the sequence is LRTDTVSTPVSGNEFLEA. The 81-residue stretch at 403–483 folds into the Disintegrin domain; sequence TPVSGNEFLE…SNDCPRWNDL (81 aa). 6 disulfide bridges follow: C417–C432, C419–C427, C426–C449, C440–C446, C445–C470, and C458–C477. The Cell attachment site signature appears at 462 to 464; it reads RGD.

This sequence belongs to the venom metalloproteinase (M12B) family. P-II subfamily. P-IIa sub-subfamily. As to quaternary structure, monomeric (disintegrin). The cofactor is Zn(2+). In terms of tissue distribution, expressed by the venom gland.

Its subcellular location is the secreted. Impairs hemostasis in the envenomed animal. Functionally, inhibits platelet aggregation induced by ADP, thrombin, platelet-activating factor and collagen. Acts by inhibiting fibrinogen interaction with platelet receptors GPIIb/GPIIIa (ITGA2B/ITGB3). This is Zinc metalloproteinase/disintegrin from Protobothrops flavoviridis (Habu).